Here is a 264-residue protein sequence, read N- to C-terminus: Protein OXIDATIVE STRESS 3 LIKE 1 (264 aa).

2 disordered regions span residues 1–76 (MDCV…GPLE) and 178–225 (TGEG…QGSF). The segment covering 29–43 (PSDSSSSPSSSASSS) has biased composition (low complexity). A compositionally biased stretch (basic and acidic residues) spans 47–56 (NSDDGEKSSE). The segment covering 57 to 67 (DGGDDAGENEV) has biased composition (acidic residues). The span at 179–201 (GEGSSSGGDSSPGSSPTTSGSPP) shows a compositional bias: low complexity. Residues 203 to 212 (QLHHHQHQMK) show a composition bias toward basic residues.

The protein localises to the nucleus. In terms of biological role, promotes slightly the tolerance to zinc (Zn) and to oxidizing chemicals (e.g. diamide). The chain is Protein OXIDATIVE STRESS 3 LIKE 1 from Arabidopsis thaliana (Mouse-ear cress).